Consider the following 556-residue polypeptide: 2-succinyl-5-enolpyruvyl-6-hydroxy-3-cyclohexene-1-carboxylate synthase (556 aa).

It belongs to the TPP enzyme family. MenD subfamily. In terms of assembly, homodimer. Mg(2+) serves as cofactor. Mn(2+) is required as a cofactor. It depends on thiamine diphosphate as a cofactor.

It carries out the reaction isochorismate + 2-oxoglutarate + H(+) = 5-enolpyruvoyl-6-hydroxy-2-succinyl-cyclohex-3-ene-1-carboxylate + CO2. It functions in the pathway quinol/quinone metabolism; 1,4-dihydroxy-2-naphthoate biosynthesis; 1,4-dihydroxy-2-naphthoate from chorismate: step 2/7. Its pathway is quinol/quinone metabolism; menaquinone biosynthesis. Its function is as follows. Catalyzes the thiamine diphosphate-dependent decarboxylation of 2-oxoglutarate and the subsequent addition of the resulting succinic semialdehyde-thiamine pyrophosphate anion to isochorismate to yield 2-succinyl-5-enolpyruvyl-6-hydroxy-3-cyclohexene-1-carboxylate (SEPHCHC). In Escherichia coli O17:K52:H18 (strain UMN026 / ExPEC), this protein is 2-succinyl-5-enolpyruvyl-6-hydroxy-3-cyclohexene-1-carboxylate synthase.